Here is a 347-residue protein sequence, read N- to C-terminus: Photosystem II protein D1 (347 aa).

3 consecutive transmembrane segments (helical) span residues 31-48, 120-135, and 144-158; these read YIGW…LAII, HFIG…EWEF, and WIYL…AATA. H120 is a chlorophyll a binding site. Position 128 (W128) interacts with pheophytin a. [CaMn4O5] cluster contacts are provided by D172 and E191. The helical transmembrane segment at 199–220 threads the bilayer; the sequence is FHILGVAGVFGGSLFSAMHGSL. H200 contributes to the chlorophyll a binding site. Residues H217 and 266–267 each bind a quinone; that span reads SF. Residue H217 participates in Fe cation binding. A Fe cation-binding site is contributed by H274. Residues 276–290 traverse the membrane as a helical segment; the sequence is FLAAWPVIGIWFTAL. 3 residues coordinate [CaMn4O5] cluster: H334, E335, and D344.

This sequence belongs to the reaction center PufL/M/PsbA/D family. PSII is composed of 1 copy each of membrane proteins PsbA, PsbB, PsbC, PsbD, PsbE, PsbF, PsbH, PsbI, PsbJ, PsbK, PsbL, PsbM, PsbT, PsbX, PsbY, PsbZ, Psb30/Ycf12, at least 3 peripheral proteins of the oxygen-evolving complex and a large number of cofactors. It forms dimeric complexes. Requires The D1/D2 heterodimer binds P680, chlorophylls that are the primary electron donor of PSII, and subsequent electron acceptors. It shares a non-heme iron and each subunit binds pheophytin, quinone, additional chlorophylls, carotenoids and lipids. D1 provides most of the ligands for the Mn4-Ca-O5 cluster of the oxygen-evolving complex (OEC). There is also a Cl(-1) ion associated with D1 and D2, which is required for oxygen evolution. The PSII complex binds additional chlorophylls, carotenoids and specific lipids. as cofactor. Tyr-163 forms a radical intermediate that is referred to as redox-active TyrZ, YZ or Y-Z.

It localises to the plastid. Its subcellular location is the chloroplast thylakoid membrane. It carries out the reaction 2 a plastoquinone + 4 hnu + 2 H2O = 2 a plastoquinol + O2. Functionally, photosystem II (PSII) is a light-driven water:plastoquinone oxidoreductase that uses light energy to abstract electrons from H(2)O, generating O(2) and a proton gradient subsequently used for ATP formation. It consists of a core antenna complex that captures photons, and an electron transfer chain that converts photonic excitation into a charge separation. The D1/D2 (PsbA/PsbD) reaction center heterodimer binds P680, the primary electron donor of PSII as well as several subsequent electron acceptors. This is Photosystem II protein D1 from Alexandrium tamarense (Red tide dinoflagellate).